Reading from the N-terminus, the 542-residue chain is Glucose-6-phosphate isomerase (542 aa).

Glu-354 functions as the Proton donor in the catalytic mechanism. Residues His-385 and Lys-505 contribute to the active site.

The protein belongs to the GPI family.

It localises to the cytoplasm. The catalysed reaction is alpha-D-glucose 6-phosphate = beta-D-fructose 6-phosphate. It participates in carbohydrate biosynthesis; gluconeogenesis. Its pathway is carbohydrate degradation; glycolysis; D-glyceraldehyde 3-phosphate and glycerone phosphate from D-glucose: step 2/4. In terms of biological role, catalyzes the reversible isomerization of glucose-6-phosphate to fructose-6-phosphate. The polypeptide is Glucose-6-phosphate isomerase (Nitrosospira multiformis (strain ATCC 25196 / NCIMB 11849 / C 71)).